Consider the following 376-residue polypeptide: Metal tolerance protein 6 (376 aa).

The tract at residues 1–28 (MAAAAGVAAGTGRGSGEGEELLPNAVEG) is disordered. At 1–123 (MAAAAGVAAG…CEKVARSEAL (123 aa)) the chain is on the cytoplasmic side. A helical transmembrane segment spans residues 124 to 144 (AIRLSNIANMVLFAAKVYASI). Residues 145 to 149 (RSGSL) are Vacuolar-facing. A helical membrane pass occupies residues 150–170 (AIIASTLDSLLDLLSGFILWF). The Cytoplasmic portion of the chain corresponds to 171 to 191 (TAFSKKTSNPYRYPIGKRRMQ). The helical transmembrane segment at 192–212 (PLGILVFASVMATLGLQIILE) threads the bilayer. The Vacuolar segment spans residues 213 to 231 (STRSLFYDGDTFRLTKEQE). A helical membrane pass occupies residues 232 to 252 (KWVVDIMLSVTSVKLLLVVYC). Over 253-376 (RSFTNEILAI…PEHARSHDTL (124 aa)) the chain is Cytoplasmic.

The protein belongs to the cation diffusion facilitator (CDF) transporter (TC 2.A.4) family. SLC30A subfamily.

The protein localises to the vacuole membrane. Functionally, involved in sequestration of excess metal in the cytoplasm into vacuoles to maintain metal homeostasis. The protein is Metal tolerance protein 6 (MTP6) of Oryza sativa subsp. japonica (Rice).